The primary structure comprises 253 residues: Zwei Ig domain protein zig-4 (253 aa).

A signal peptide spans M1–A16. 2 Ig-like C2-type domains span residues P43–E146 and P162–Y245. 2 cysteine pairs are disulfide-bonded: C67–C130 and C183–C229.

As to expression, expressed in PVT, ASK, BAG, M2 and ASI neurons. In L1 larvae, expressed in pharyngeal ectoderm and mesoderm.

The protein resides in the secreted. Its function is as follows. Required for maintaining axon position of PVQ and PVP neurons postembryonically in the ventral nerve cord (VNC) by preventing axons drifting into the opposite side of the VNC that could occur during body growth and movement. This chain is Zwei Ig domain protein zig-4, found in Caenorhabditis elegans.